A 287-amino-acid chain; its full sequence is Rhomboid-like protein 18 (287 aa).

6 consecutive transmembrane segments (helical) span residues 10–30, 53–73, 90–110, 117–137, 145–165, and 172–192; these read NAPV…FFGI, LIIS…LYLL, VFIF…LSLT, LLTS…FLDI, VLGV…QLLL, and IFTG…IFGI. A UBA domain is found at 244-284; that stretch reads EPSEEAIATLVSMGFDQNAARQALVHARNDVNAATNILLEA.

The protein belongs to the peptidase S54 family.

The protein resides in the membrane. Its function is as follows. Probable rhomboid-type serine protease that catalyzes intramembrane proteolysis. This Arabidopsis thaliana (Mouse-ear cress) protein is Rhomboid-like protein 18.